We begin with the raw amino-acid sequence, 38 residues long: Photosystem II reaction center protein L (38 aa).

A helical membrane pass occupies residues Ser17 to Phe37.

Belongs to the PsbL family. PSII is composed of 1 copy each of membrane proteins PsbA, PsbB, PsbC, PsbD, PsbE, PsbF, PsbH, PsbI, PsbJ, PsbK, PsbL, PsbM, PsbT, PsbX, PsbY, PsbZ, Psb30/Ycf12, at least 3 peripheral proteins of the oxygen-evolving complex and a large number of cofactors. It forms dimeric complexes.

Its subcellular location is the plastid. It localises to the chloroplast thylakoid membrane. Its function is as follows. One of the components of the core complex of photosystem II (PSII). PSII is a light-driven water:plastoquinone oxidoreductase that uses light energy to abstract electrons from H(2)O, generating O(2) and a proton gradient subsequently used for ATP formation. It consists of a core antenna complex that captures photons, and an electron transfer chain that converts photonic excitation into a charge separation. This subunit is found at the monomer-monomer interface and is required for correct PSII assembly and/or dimerization. This Guillardia theta (Cryptophyte) protein is Photosystem II reaction center protein L.